We begin with the raw amino-acid sequence, 881 residues long: Probable inorganic carbon transporter subunit DabA (881 aa).

Zn(2+) contacts are provided by cysteine 399, aspartate 401, histidine 585, and cysteine 600.

The protein belongs to the inorganic carbon transporter (TC 9.A.2) DabA family. In terms of assembly, forms a complex with DabB. Requires Zn(2+) as cofactor.

Its subcellular location is the cell membrane. Functionally, part of an energy-coupled inorganic carbon pump. The polypeptide is Probable inorganic carbon transporter subunit DabA (Geobacillus sp. (strain WCH70)).